A 259-amino-acid chain; its full sequence is Ribonuclease HII (259 aa).

One can recognise an RNase H type-2 domain in the interval 70–258; the sequence is TLIAGIDEVG…VKSLVLGKKE (189 aa). Residues aspartate 76, glutamate 77, and aspartate 168 each contribute to the a divalent metal cation site.

This sequence belongs to the RNase HII family. The cofactor is Mn(2+). It depends on Mg(2+) as a cofactor.

It localises to the cytoplasm. The catalysed reaction is Endonucleolytic cleavage to 5'-phosphomonoester.. Its function is as follows. Endonuclease that specifically degrades the RNA of RNA-DNA hybrids. In Streptococcus pneumoniae serotype 4 (strain ATCC BAA-334 / TIGR4), this protein is Ribonuclease HII.